We begin with the raw amino-acid sequence, 394 residues long: Elongation factor Tu (394 aa).

A tr-type G domain is found at 10-204 (KPHVNVGTIG…ALDSYIPEPQ (195 aa)). The segment at 19 to 26 (GHVDHGKT) is G1. Residue 19 to 26 (GHVDHGKT) coordinates GTP. Threonine 26 contacts Mg(2+). A G2 region spans residues 60-64 (GITIN). The interval 81–84 (DCPG) is G3. GTP is bound by residues 81-85 (DCPGH) and 136-139 (NKCD). The interval 136 to 139 (NKCD) is G4. Positions 174 to 176 (SAL) are G5.

Belongs to the TRAFAC class translation factor GTPase superfamily. Classic translation factor GTPase family. EF-Tu/EF-1A subfamily. As to quaternary structure, monomer.

The protein resides in the cytoplasm. The catalysed reaction is GTP + H2O = GDP + phosphate + H(+). GTP hydrolase that promotes the GTP-dependent binding of aminoacyl-tRNA to the A-site of ribosomes during protein biosynthesis. In Shewanella putrefaciens (Pseudomonas putrefaciens), this protein is Elongation factor Tu.